Here is a 211-residue protein sequence, read N- to C-terminus: Protein-methionine-sulfoxide reductase heme-binding subunit MsrQ (211 aa).

Transmembrane regions (helical) follow at residues 10 to 30 (WLKVCLHLAGLLPFLWLVWAI), 82 to 102 (LWCFAWATLHLTSYALLELGV), 116 to 136 (PYLTLGIISWVILLALAFTST), and 153 to 173 (FVYLVAILAPIHYLWSVKIIS).

The protein belongs to the MsrQ family. Heterodimer of a catalytic subunit (MsrP) and a heme-binding subunit (MsrQ). FMN serves as cofactor. Requires heme b as cofactor.

Its subcellular location is the cell inner membrane. Functionally, part of the MsrPQ system that repairs oxidized periplasmic proteins containing methionine sulfoxide residues (Met-O), using respiratory chain electrons. Thus protects these proteins from oxidative-stress damage caused by reactive species of oxygen and chlorine generated by the host defense mechanisms. MsrPQ is essential for the maintenance of envelope integrity under bleach stress, rescuing a wide series of structurally unrelated periplasmic proteins from methionine oxidation, including the primary periplasmic chaperone SurA and the lipoprotein Pal. MsrQ provides electrons for reduction to the reductase catalytic subunit MsrP, using the quinone pool of the respiratory chain. The sequence is that of Protein-methionine-sulfoxide reductase heme-binding subunit MsrQ from Shigella dysenteriae serotype 1 (strain Sd197).